The primary structure comprises 441 residues: MHNPQHYMTGFGNEFATEAVAGSLPVGQNSPQRVAHGLYAEQLSGTAFTAPRGENRRSWLYRIRPAAVHGRFSLIEQSRLHNDFGGGPVPPDQMRWSPLPLPATPTDFVDGLYTMAGNGSPEAMTGVAVHLYAANASMHGRFFYNADGELLLVPQLGRLRVCTELGVLELEPQQIGVIPRGVRFRVELLDSAARGYVCENFGGLLRLPDLGPIGANGLANPRDFETPRAAFEQRDGAFELVAKFQGHLWRADIDHSPLDVVAWHGNYAPYRYDLRRFNTIGSISFDHPDPSIFTVLTSPSDTHGTANMDFAIFPPRWLVAQHTFRPPWFHRNVASEFMGLVHGVYDAKAEGFAPGGASLHNCMSGHGPDAATFDKASQADLTRPDVIAETMAFMFETRAVLRPTQQALSAAHRQADYQQCWSGLRAAFQHPPAKNTTSVLR.

The Proton acceptor role is filled by His287. Residues His330 and Glu336 each coordinate Fe cation. Homogentisate contacts are provided by Tyr345 and His366. A Fe cation-binding site is contributed by His366.

This sequence belongs to the homogentisate dioxygenase family. Hexamer; dimer of trimers. Requires Fe cation as cofactor.

It carries out the reaction homogentisate + O2 = 4-maleylacetoacetate + H(+). Its pathway is amino-acid degradation; L-phenylalanine degradation; acetoacetate and fumarate from L-phenylalanine: step 4/6. Involved in the catabolism of homogentisate (2,5-dihydroxyphenylacetate or 2,5-OH-PhAc), a central intermediate in the degradation of phenylalanine and tyrosine. Catalyzes the oxidative ring cleavage of the aromatic ring of homogentisate to yield maleylacetoacetate. The chain is Homogentisate 1,2-dioxygenase from Xanthomonas oryzae pv. oryzae (strain MAFF 311018).